Consider the following 189-residue polypeptide: uncharacterized protein (189 aa).

4 helical membrane passes run 49–69 (LLGILKLITFPVLCAAGLFVF), 78–98 (LFHKSFQGCSGYVLATFLSLF), 102–122 (LTIVGIVSCITWAPGFIFPMI), and 124–144 (VSIAFATVETCFQIYTHLFPA). Residues 165-189 (SSSAPDLNYPSLPTQSASPSQRFSA) form a disordered region.

It belongs to the chlamydial CPn_0442/CT_006/TC_0274 family.

It is found in the cell membrane. This is an uncharacterized protein from Chlamydia trachomatis serovar D (strain ATCC VR-885 / DSM 19411 / UW-3/Cx).